The sequence spans 213 residues: Orotate phosphoribosyltransferase (213 aa).

Position 26 (K26) interacts with 5-phospho-alpha-D-ribose 1-diphosphate. Residue 34 to 35 (FF) participates in orotate binding. 5-phospho-alpha-D-ribose 1-diphosphate contacts are provided by residues 72–73 (YK), R99, K100, K103, H105, and 124–132 (DDVITAGTA). Positions 128 and 156 each coordinate orotate.

The protein belongs to the purine/pyrimidine phosphoribosyltransferase family. PyrE subfamily. Homodimer. The cofactor is Mg(2+).

The enzyme catalyses orotidine 5'-phosphate + diphosphate = orotate + 5-phospho-alpha-D-ribose 1-diphosphate. It participates in pyrimidine metabolism; UMP biosynthesis via de novo pathway; UMP from orotate: step 1/2. Functionally, catalyzes the transfer of a ribosyl phosphate group from 5-phosphoribose 1-diphosphate to orotate, leading to the formation of orotidine monophosphate (OMP). The sequence is that of Orotate phosphoribosyltransferase from Salmonella arizonae (strain ATCC BAA-731 / CDC346-86 / RSK2980).